Reading from the N-terminus, the 115-residue chain is Thrombospondin type-1 domain-containing protein 8 (115 aa).

The N-terminal stretch at 1-21 (MARTPGALLLAPLLLLQLATP) is a signal peptide. Positions 53–104 (DSILGPWGKWRCLCDLGKQERSREVVGTAPGPVFMDPEKLIQLRPCRQRDCP) constitute a TSP type-1 domain.

The sequence is that of Thrombospondin type-1 domain-containing protein 8 from Homo sapiens (Human).